A 388-amino-acid chain; its full sequence is MNLHEYQGKQLFAEYGLPVSKGYAVDTPEAAAEACDKIGGTEWVVKAQVHAGGRGKAGGVKLVRSKEDAKAFAQQWLGKRLVTYQTDANGQPVTKILVESCTDIAKELYLGAVVDRSSRRIVFMASTEGGVDIEKIAEETPEKILKATIDPLVGAQPFQGRELAFQLGLEGKQVAQFAKIFVGLAKLFQDHDLALLEVNPLVIKADGDLHCLDAKINIDANAMYRQPKLKTFHDPSQDDPREAHAAKFELNYVALEGNIGCMVNGAGLAMGTMDIVNLHGGKPANFLDVGGGATKERVTEAFKIILSDSNVAAVLVNIFGGIVRCDMIAEGIIGAVKEVGVKIPVVVRLEGNNAELGAKVLAESGLNIIAATSLTDAAQQVVKAAEGK.

The ATP-grasp domain maps to 9 to 244 (KQLFAEYGLP…PSQDDPREAH (236 aa)). ATP contacts are provided by residues Lys46, 53 to 55 (GRG), Glu99, Thr102, and Glu107. Residues Asn199 and Asp213 each contribute to the Mg(2+) site. Residues Asn264 and 321–323 (GIV) each bind substrate.

This sequence belongs to the succinate/malate CoA ligase beta subunit family. Heterotetramer of two alpha and two beta subunits. It depends on Mg(2+) as a cofactor.

The enzyme catalyses succinate + ATP + CoA = succinyl-CoA + ADP + phosphate. It catalyses the reaction GTP + succinate + CoA = succinyl-CoA + GDP + phosphate. Its pathway is carbohydrate metabolism; tricarboxylic acid cycle; succinate from succinyl-CoA (ligase route): step 1/1. In terms of biological role, succinyl-CoA synthetase functions in the citric acid cycle (TCA), coupling the hydrolysis of succinyl-CoA to the synthesis of either ATP or GTP and thus represents the only step of substrate-level phosphorylation in the TCA. The beta subunit provides nucleotide specificity of the enzyme and binds the substrate succinate, while the binding sites for coenzyme A and phosphate are found in the alpha subunit. The protein is Succinate--CoA ligase [ADP-forming] subunit beta of Pseudomonas fluorescens (strain SBW25).